Here is a 142-residue protein sequence, read N- to C-terminus: Universal stress protein C (142 aa).

The protein belongs to the universal stress protein A family.

Its subcellular location is the cytoplasm. Functionally, required for resistance to DNA-damaging agents. The polypeptide is Universal stress protein C (uspC) (Escherichia coli O6:H1 (strain CFT073 / ATCC 700928 / UPEC)).